A 467-amino-acid chain; its full sequence is Hydroxyacid-oxoacid transhydrogenase, mitochondrial (467 aa).

Lys-445 carries the N6-acetyllysine modification. Phosphoserine is present on Ser-452.

It belongs to the iron-containing alcohol dehydrogenase family. Hydroxyacid-oxoacid transhydrogenase subfamily. As to expression, only expressed in adult liver.

The protein resides in the mitochondrion. It catalyses the reaction (S)-3-hydroxybutanoate + 2-oxoglutarate = (R)-2-hydroxyglutarate + acetoacetate. The catalysed reaction is 4-hydroxybutanoate + 2-oxoglutarate = (R)-2-hydroxyglutarate + succinate semialdehyde. Its function is as follows. Catalyzes the cofactor-independent reversible oxidation of gamma-hydroxybutyrate (GHB) to succinic semialdehyde (SSA) coupled to reduction of 2-ketoglutarate (2-KG) to D-2-hydroxyglutarate (D-2-HG). D,L-3-hydroxyisobutyrate and L-3-hydroxybutyrate (L-3-OHB) are also substrates for HOT with 10-fold lower activities. The polypeptide is Hydroxyacid-oxoacid transhydrogenase, mitochondrial (ADHFE1) (Homo sapiens (Human)).